The primary structure comprises 310 residues: MGIFSRLQSLFNVFMTTDTHYVGRFAPSPSGPLHFGSLIAALGSYLQARSQQGKWLVRIEDLDPPREIRGAADDILRTLEAYGLTWDGSVMYQSQRHGAYQDQIDQWLHGGDAYYCQCTRKQIKTAGGFYPGTCRHLHRSAENSAVRLNVDTPITYFVDRLHGQIDIPATLAQEDFIIRRRDGLYAYNLAVVLDDIEQNITEVVRGADLIEPTGRQIGLYRQLQHPEVSYLHLPLAVTDNGNKLSKQNHAPAIDKSHPVPALIAAMSFLGMTPPATLIKEELKDVLQWGINAWCIDNLPKMTEIILTKTH.

Residues 24–28 (RFAPS) and Glu60 each bind L-glutamate. The short motif at 27–37 (PSPSGPLHFGS) is the 'HIGH' region element. Residues Cys116, Cys118, Tyr130, and Cys134 each coordinate Zn(2+). Tyr187 and Arg205 together coordinate L-glutamate. The short motif at 243–247 (KLSKQ) is the 'KMSKS' region element. An ATP-binding site is contributed by Lys246.

It belongs to the class-I aminoacyl-tRNA synthetase family. GluQ subfamily. Requires Zn(2+) as cofactor.

Its function is as follows. Catalyzes the tRNA-independent activation of glutamate in presence of ATP and the subsequent transfer of glutamate onto a tRNA(Asp). Glutamate is transferred on the 2-amino-5-(4,5-dihydroxy-2-cyclopenten-1-yl) moiety of the queuosine in the wobble position of the QUC anticodon. This chain is Glutamyl-Q tRNA(Asp) synthetase, found in Photobacterium profundum (strain SS9).